Reading from the N-terminus, the 31-residue chain is Conotoxin pc6d (31 aa).

Disulfide bonds link Cys-2–Cys-20, Cys-9–Cys-25, and Cys-19–Cys-29.

Belongs to the conotoxin O1 superfamily. As to expression, expressed by the venom duct.

The protein resides in the secreted. The sequence is that of Conotoxin pc6d from Conus pictus (Cone snail).